Here is a 444-residue protein sequence, read N- to C-terminus: Acyl-CoA 6-desaturase (444 aa).

Residues 1-131 are Cytoplasmic-facing; the sequence is MGKGGNQGEG…DMNLFKTNHV (131 aa). In terms of domain architecture, Cytochrome b5 heme-binding spans 18-95; it reads VPTFSWEEIQ…LKPLLIGELA (78 aa). Residues 132–152 form a helical membrane-spanning segment; that stretch reads FFLLLLAHIIALESIAWFTVF. Topologically, residues 153–157 are lumenal; that stretch reads YFGNG. A helical membrane pass occupies residues 158–178; it reads WIPTLITAFVLATSQAQAGWL. At 179–264 the chain is on the cytoplasmic side; that stretch reads QHDYGHLSVY…KYLPYNHQHE (86 aa). The Histidine box-1 signature appears at 180 to 184; sequence HDYGH. The Histidine box-2 signature appears at 217–221; the sequence is HFQHH. A helical membrane pass occupies residues 265-285; sequence YFFLIGPPLLIPMYFQYQIIM. Over 286–305 the chain is Lumenal; it reads TMIVHKNWVDLAWAVSYYIR. The helical transmembrane segment at 306–326 threads the bilayer; that stretch reads FFITYIPFYGILGALLFLNFI. The Cytoplasmic segment spans residues 327 to 444; it reads RFLESHWFVW…KLWLDAYLHK (118 aa). Residues 382–386 carry the Histidine box-3 motif; the sequence is QIEHH.

This sequence belongs to the fatty acid desaturase type 1 family. In terms of tissue distribution, expressed in a wide array of tissues, highest expression is found in liver followed by brain, lung, heart, and retina. A lower level is found in breast tumor when compared with normal tissues; lowest levels were found in patients with poor prognostic index.

The protein localises to the endoplasmic reticulum membrane. It catalyses the reaction (9Z,12Z)-octadecadienoyl-CoA + 2 Fe(II)-[cytochrome b5] + O2 + 2 H(+) = (6Z,9Z,12Z)-octadecatrienoyl-CoA + 2 Fe(III)-[cytochrome b5] + 2 H2O. The enzyme catalyses (9Z,12Z,15Z)-octadecatrienoyl-CoA + 2 Fe(II)-[cytochrome b5] + O2 + 2 H(+) = (6Z,9Z,12Z,15Z)-octadecatetraenoyl-CoA + 2 Fe(III)-[cytochrome b5] + 2 H2O. The catalysed reaction is hexadecanoyl-CoA + 2 Fe(II)-[cytochrome b5] + O2 + 2 H(+) = (6Z)-hexadecenoyl-CoA + 2 Fe(III)-[cytochrome b5] + 2 H2O. It carries out the reaction (9Z,12Z,15Z,18Z,21Z)-tetracosapentaenoyl-CoA + 2 Fe(II)-[cytochrome b5] + O2 + 2 H(+) = (6Z,9Z,12Z,15Z,18Z,21Z)-tetracosahexaenoyl-CoA + 2 Fe(III)-[cytochrome b5] + 2 H2O. It catalyses the reaction (11E)-octadecenoyl-CoA + 2 Fe(II)-[cytochrome b5] + O2 + 2 H(+) = (6Z,11E)-octadecadienoyl-CoA + 2 Fe(III)-[cytochrome b5] + 2 H2O. The enzyme catalyses (11Z,14Z)-eicosadienoyl-CoA + 2 Fe(II)-[cytochrome b5] + O2 + 2 H(+) = (8Z,11Z,14Z)-eicosatrienoyl-CoA + 2 Fe(III)-[cytochrome b5] + 2 H2O. The catalysed reaction is (11Z,14Z,17Z)-eicosatrienoyl-CoA + 2 Fe(II)-[cytochrome b5] + O2 + 2 H(+) = (8Z,11Z,14Z,17Z)-eicosatetraenoyl-CoA + 2 Fe(III)-[cytochrome b5] + 2 H2O. Its pathway is lipid metabolism; polyunsaturated fatty acid biosynthesis. In terms of biological role, involved in the biosynthesis of highly unsaturated fatty acids (HUFA) from the essential polyunsaturated fatty acids (PUFA) linoleic acid (LA) (18:2n-6) and alpha-linolenic acid (ALA) (18:3n-3) precursors, acting as a fatty acyl-coenzyme A (CoA) desaturase that introduces a cis double bond at carbon 6 of the fatty acyl chain. Catalyzes the first and rate limiting step in this pathway which is the desaturation of LA (18:2n-6) and ALA (18:3n-3) into gamma-linoleate (GLA) (18:3n-6) and stearidonate (18:4n-3), respectively. Subsequently, in the biosynthetic pathway of HUFA n-3 series, it desaturates tetracosapentaenoate (24:5n-3) to tetracosahexaenoate (24:6n-3), which is then converted to docosahexaenoate (DHA)(22:6n-3), an important lipid for nervous system function. Desaturates hexadecanate (palmitate) to produce 6Z-hexadecenoate (sapienate), a fatty acid unique to humans and major component of human sebum, that has been implicated in the development of acne and may have potent antibacterial activity. It can also desaturate (11E)-octadecenoate (trans-vaccenoate, the predominant trans fatty acid in human milk) at carbon 6 generating (6Z,11E)-octadecadienoate. In addition to Delta-6 activity, this enzyme exhibits Delta-8 activity with slight biases toward n-3 fatty acyl-CoA substrates. This is Acyl-CoA 6-desaturase from Homo sapiens (Human).